A 172-amino-acid chain; its full sequence is Small ribosomal subunit protein uS13c (172 aa).

A chloroplast-targeting transit peptide spans 1–47 (MAHTLATPVAPSVSLICNTKLSVSLSSSSLAFRPVNPKNGGGLSIKC).

As to quaternary structure, component of the chloroplast small ribosomal subunit (SSU). Mature 70S chloroplast ribosomes of higher plants consist of a small (30S) and a large (50S) subunit. The 30S small subunit contains 1 molecule of ribosomal RNA (16S rRNA) and 24 different proteins. The 50S large subunit contains 3 rRNA molecules (23S, 5S and 4.5S rRNA) and 33 different proteins. uS13c interacts with translation factor pY (PSRP1).

It is found in the plastid. The protein resides in the chloroplast. Component of the chloroplast ribosome (chloro-ribosome), a dedicated translation machinery responsible for the synthesis of chloroplast genome-encoded proteins, including proteins of the transcription and translation machinery and components of the photosynthetic apparatus. This Spinacia oleracea (Spinach) protein is Small ribosomal subunit protein uS13c (RPS13).